A 268-amino-acid polypeptide reads, in one-letter code: Thymidylate synthase (268 aa).

DUMP-binding positions include Arg-26 and 131 to 132 (RR). The Nucleophile role is filled by Cys-151. DUMP is bound by residues 171 to 174 (RSAD), Asn-182, and 212 to 214 (HIY). Asp-174 provides a ligand contact to (6R)-5,10-methylene-5,6,7,8-tetrahydrofolate. Ser-267 lines the (6R)-5,10-methylene-5,6,7,8-tetrahydrofolate pocket.

It belongs to the thymidylate synthase family. Bacterial-type ThyA subfamily. As to quaternary structure, homodimer.

Its subcellular location is the cytoplasm. The enzyme catalyses dUMP + (6R)-5,10-methylene-5,6,7,8-tetrahydrofolate = 7,8-dihydrofolate + dTMP. It functions in the pathway pyrimidine metabolism; dTTP biosynthesis. Functionally, catalyzes the reductive methylation of 2'-deoxyuridine-5'-monophosphate (dUMP) to 2'-deoxythymidine-5'-monophosphate (dTMP) while utilizing 5,10-methylenetetrahydrofolate (mTHF) as the methyl donor and reductant in the reaction, yielding dihydrofolate (DHF) as a by-product. This enzymatic reaction provides an intracellular de novo source of dTMP, an essential precursor for DNA biosynthesis. The protein is Thymidylate synthase of Corynebacterium aurimucosum (strain ATCC 700975 / DSM 44827 / CIP 107346 / CN-1) (Corynebacterium nigricans).